The chain runs to 404 residues: Alpha-galactosidase A (404 aa).

The N-terminal stretch at 1–23 is a signal peptide; sequence MRKQLLLGLGLVSALLVSVQASA. Cystine bridges form between Cys45/Cys77 and Cys124/Cys154. Asp152 functions as the Nucleophile in the catalytic mechanism. A substrate-binding site is contributed by 185–189; the sequence is EWGDN. Catalysis depends on Asp207, which acts as the Proton donor.

This sequence belongs to the glycosyl hydrolase 27 family.

The enzyme catalyses Hydrolysis of terminal, non-reducing alpha-D-galactose residues in alpha-D-galactosides, including galactose oligosaccharides, galactomannans and galactolipids.. In terms of biological role, hydrolyzes galactomannan found in plant cell wall, by cleaving alpha-1,6-D-galactose side-chains from the mannan backbone. Appears to act in synergy with mannanase (ManA) to elicit hydrolysis of galactomannan. Has greater activity against galactomannans with decreased degree of polymerisation values. To a lesser extent, is also able to degrade other galactosides containing alpha-1,6-linked D-galactose, such as melibiose and stachyose. The sequence is that of Alpha-galactosidase A (agaA) from Cellvibrio japonicus (strain Ueda107) (Pseudomonas fluorescens subsp. cellulosa).